A 511-amino-acid chain; its full sequence is Maturase K (511 aa).

Belongs to the intron maturase 2 family. MatK subfamily.

It localises to the plastid. The protein localises to the chloroplast. Its function is as follows. Usually encoded in the trnK tRNA gene intron. Probably assists in splicing its own and other chloroplast group II introns. This is Maturase K from Chloranthus spicatus (Chulantree).